The following is a 163-amino-acid chain: Globin CTT-V (163 aa).

A signal peptide spans 1–16 (MKFFAVLTLCIIGAIA). Residues 18–163 (PLTSDEANLV…YTVAFEVIPA (146 aa)) enclose the Globin domain. Heme b is bound by residues histidine 76 and histidine 111.

The protein belongs to the globin family.

The protein is Globin CTT-V (CTT-V) of Chironomus thummi piger (Midge).